Here is a 335-residue protein sequence, read N- to C-terminus: POU domain, class 5, transcription factor 2 (335 aa).

A disordered region spans residues 1–23; sequence MAGRRSSNVCPFPGNSGGGLEGP. Positions 113 to 187 constitute a POU-specific domain; it reads DVSAIQKEME…LLKMWLEEVD (75 aa). The segment at residues 205–264 is a DNA-binding region (homeobox); that stretch reads RKRRRASRERRIGSNLEKLFLQCPEPTPQQISYIAGRLRLQKDLVQVWFSNRSQMAGWPT.

It belongs to the POU transcription factor family. Class-5 subfamily. Highly restricted to adult testis.

The protein localises to the nucleus. Its function is as follows. Transcription factor that binds preferentially to the octamer motif (5'-ATGTTAAT-3'). May exert a regulatory function in meiotic events that are required for terminal differentiation of male germ cell. The polypeptide is POU domain, class 5, transcription factor 2 (Pou5f2) (Rattus norvegicus (Rat)).